The primary structure comprises 147 residues: Protein LOL4 (147 aa).

Putative zinc finger regions lie at residues 4-34 (QLIC…LTAV), 44-74 (ELIC…LNST), and 82-112 (HLTC…VNHV).

Its subcellular location is the nucleus. Its function is as follows. Putative zinc finger that may be involved in programmed cell death and defense response. The polypeptide is Protein LOL4 (LOL4) (Oryza sativa subsp. japonica (Rice)).